Reading from the N-terminus, the 445-residue chain is N-succinylarginine dihydrolase (445 aa).

Residues 19–28 (AGLSFGNVAS), asparagine 110, and 137–138 (HR) contribute to the substrate site. Glutamate 174 is an active-site residue. Position 214 (arginine 214) interacts with substrate. Histidine 250 is a catalytic residue. 2 residues coordinate substrate: aspartate 252 and asparagine 363. Cysteine 369 acts as the Nucleophile in catalysis.

This sequence belongs to the succinylarginine dihydrolase family. As to quaternary structure, homodimer.

The enzyme catalyses N(2)-succinyl-L-arginine + 2 H2O + 2 H(+) = N(2)-succinyl-L-ornithine + 2 NH4(+) + CO2. It functions in the pathway amino-acid degradation; L-arginine degradation via AST pathway; L-glutamate and succinate from L-arginine: step 2/5. Catalyzes the hydrolysis of N(2)-succinylarginine into N(2)-succinylornithine, ammonia and CO(2). This Shewanella pealeana (strain ATCC 700345 / ANG-SQ1) protein is N-succinylarginine dihydrolase.